The chain runs to 462 residues: Succinate semialdehyde dehydrogenase [NAD(P)+] Sad (462 aa).

NADP(+) is bound by residues 136 to 137, 160 to 163, and 212 to 213; these read WN, KHAP, and GS. Glu-234 (proton acceptor) is an active-site residue. An NADP(+)-binding site is contributed by Leu-235. The active-site Nucleophile is the Cys-268. Residue Glu-365 participates in NADP(+) binding.

The protein belongs to the aldehyde dehydrogenase family. As to quaternary structure, homodimer.

The catalysed reaction is succinate semialdehyde + NAD(+) + H2O = succinate + NADH + 2 H(+). The enzyme catalyses succinate semialdehyde + NADP(+) + H2O = succinate + NADPH + 2 H(+). It functions in the pathway amino-acid degradation; 4-aminobutanoate degradation. Its function is as follows. Catalyzes the NAD(+)-dependent oxidation of succinate semialdehyde to succinate. It acts preferentially with NAD as cosubstrate but can also use NADP. Prevents the toxic accumulation of succinate semialdehyde (SSA) and plays an important role when arginine and putrescine are used as the sole nitrogen or carbon sources. In Escherichia coli (strain K12), this protein is Succinate semialdehyde dehydrogenase [NAD(P)+] Sad (sad).